The primary structure comprises 144 residues: Large ribosomal subunit protein uL15 (144 aa).

The disordered stretch occupies residues 1-49 (MRLNTLSPAAGAKSAAKRVGRGIGSGLGKTAGRGHKGQKSRSGGGVRVG). Gly residues predominate over residues 21–31 (RGIGSGLGKTA).

The protein belongs to the universal ribosomal protein uL15 family. Part of the 50S ribosomal subunit.

Its function is as follows. Binds to the 23S rRNA. The sequence is that of Large ribosomal subunit protein uL15 from Shewanella piezotolerans (strain WP3 / JCM 13877).